We begin with the raw amino-acid sequence, 342 residues long: UDP-N-acetylglucosamine--N-acetylmuramyl-(pentapeptide) pyrophosphoryl-undecaprenol N-acetylglucosamine transferase (342 aa).

Residues 10 to 12, Asn124, Ser177, and Gln275 contribute to the UDP-N-acetyl-alpha-D-glucosamine site; that span reads TGG.

This sequence belongs to the glycosyltransferase 28 family. MurG subfamily.

It is found in the cell inner membrane. The catalysed reaction is di-trans,octa-cis-undecaprenyl diphospho-N-acetyl-alpha-D-muramoyl-L-alanyl-D-glutamyl-meso-2,6-diaminopimeloyl-D-alanyl-D-alanine + UDP-N-acetyl-alpha-D-glucosamine = di-trans,octa-cis-undecaprenyl diphospho-[N-acetyl-alpha-D-glucosaminyl-(1-&gt;4)]-N-acetyl-alpha-D-muramoyl-L-alanyl-D-glutamyl-meso-2,6-diaminopimeloyl-D-alanyl-D-alanine + UDP + H(+). It participates in cell wall biogenesis; peptidoglycan biosynthesis. Its function is as follows. Cell wall formation. Catalyzes the transfer of a GlcNAc subunit on undecaprenyl-pyrophosphoryl-MurNAc-pentapeptide (lipid intermediate I) to form undecaprenyl-pyrophosphoryl-MurNAc-(pentapeptide)GlcNAc (lipid intermediate II). The polypeptide is UDP-N-acetylglucosamine--N-acetylmuramyl-(pentapeptide) pyrophosphoryl-undecaprenol N-acetylglucosamine transferase (Campylobacter jejuni (strain RM1221)).